The sequence spans 460 residues: NADH-ubiquinone oxidoreductase chain 4 (460 aa).

12 helical membrane passes run P20–F42, P61–S81, Q93–A113, T114–I134, T148–L168, I195–L215, P225–M245, L258–L278, S285–I304, W308–L330, I351–P371, and I394–M414.

Belongs to the complex I subunit 4 family.

Its subcellular location is the mitochondrion membrane. It carries out the reaction a ubiquinone + NADH + 5 H(+)(in) = a ubiquinol + NAD(+) + 4 H(+)(out). Its function is as follows. Core subunit of the mitochondrial membrane respiratory chain NADH dehydrogenase (Complex I) that is believed to belong to the minimal assembly required for catalysis. Complex I functions in the transfer of electrons from NADH to the respiratory chain. The immediate electron acceptor for the enzyme is believed to be ubiquinone. The sequence is that of NADH-ubiquinone oxidoreductase chain 4 (MT-ND4) from Carassius auratus (Goldfish).